Consider the following 238-residue polypeptide: UPF0280 protein Mboo_1274 (238 aa).

The protein belongs to the UPF0280 family.

This is UPF0280 protein Mboo_1274 from Methanoregula boonei (strain DSM 21154 / JCM 14090 / 6A8).